We begin with the raw amino-acid sequence, 217 residues long: Large ribosomal subunit protein bL25 (217 aa).

Residues 178–217 form a disordered region; the sequence is VVAPTEEPTEEEIEAMEGEQQTEEPEVVGESKEDEEKTEE. Over residues 184–205 the composition is skewed to acidic residues; that stretch reads EPTEEEIEAMEGEQQTEEPEVV. Positions 206–217 are enriched in basic and acidic residues; the sequence is GESKEDEEKTEE.

It belongs to the bacterial ribosomal protein bL25 family. CTC subfamily. Part of the 50S ribosomal subunit; part of the 5S rRNA/L5/L18/L25 subcomplex. Contacts the 5S rRNA. Binds to the 5S rRNA independently of L5 and L18.

In terms of biological role, this is one of the proteins that binds to the 5S RNA in the ribosome where it forms part of the central protuberance. In Staphylococcus aureus (strain MRSA252), this protein is Large ribosomal subunit protein bL25.